The primary structure comprises 313 residues: Beta-ketoacyl-[acyl-carrier-protein] synthase III (313 aa).

Active-site residues include cysteine 112 and histidine 238. The segment at 239–243 (QANIR) is ACP-binding. Asparagine 268 is a catalytic residue.

This sequence belongs to the thiolase-like superfamily. FabH family. In terms of assembly, homodimer.

The protein localises to the cytoplasm. It carries out the reaction malonyl-[ACP] + acetyl-CoA + H(+) = 3-oxobutanoyl-[ACP] + CO2 + CoA. The protein operates within lipid metabolism; fatty acid biosynthesis. Functionally, catalyzes the condensation reaction of fatty acid synthesis by the addition to an acyl acceptor of two carbons from malonyl-ACP. Catalyzes the first condensation reaction which initiates fatty acid synthesis and may therefore play a role in governing the total rate of fatty acid production. Possesses both acetoacetyl-ACP synthase and acetyl transacylase activities. Its substrate specificity determines the biosynthesis of branched-chain and/or straight-chain of fatty acids. The protein is Beta-ketoacyl-[acyl-carrier-protein] synthase III of Staphylococcus epidermidis (strain ATCC 35984 / DSM 28319 / BCRC 17069 / CCUG 31568 / BM 3577 / RP62A).